The primary structure comprises 117 residues: Protein GL2-INTERACTING REPRESSOR 2 (117 aa).

Positions 1-56 (MSRRNKNGPKLELRLNLSPPPSQASQMSLVRSPNRSNTTSPSSCVSSETNQEENET) are disordered. Positions 10–15 (KLELRL) match the EAR motif. Residues 31–49 (RSPNRSNTTSPSSCVSSET) are compositionally biased toward low complexity.

Interacts with GL2. Interacts with TPL.

The protein resides in the nucleus. Acts as a negative regulator of root hair development redundantly with GIR1. GIR1 and GIR2 may function as adapter proteins that associate with GL2 and participate in the control of root hair formation. GIR1 and GIR2 may function as adapter proteins that associate with TPL and participate in the repression of root gene expression. In Arabidopsis thaliana (Mouse-ear cress), this protein is Protein GL2-INTERACTING REPRESSOR 2.